A 145-amino-acid polypeptide reads, in one-letter code: MQLYLVLLLISYLLTPIGASILGRCVVAKKLYDGGLNYFEGYSLENWVCLAYFESKFNPSAVYENSRDGSTGFGLFQIRDNEWCDHGKNLCSVSCTALLNPNLKDTIECAKKIVKGKQGMGAWPVWSRNCQLSDILDRWLDGCEL.

The signal sequence occupies residues 1–19; it reads MQLYLVLLLISYLLTPIGA. The C-type lysozyme domain maps to 20–145; the sequence is SILGRCVVAK…LDRWLDGCEL (126 aa). 4 disulfide bridges follow: C25–C143, C49–C130, C84–C95, and C91–C109. Residue E54 is part of the active site.

Belongs to the glycosyl hydrolase 22 family. As to quaternary structure, monomer. Expressed in the brain, lung, ovary, uterus and testis. In testis expressed in the germinal epithelium and on the maturing spermatozoa (at protein level).

It is found in the secreted. The protein localises to the cytoplasmic vesicle. Its subcellular location is the secretory vesicle. It localises to the acrosome. The protein resides in the cell projection. It is found in the cilium. The protein localises to the flagellum. May be involved in fertilization. Has no detectable bacteriolytic and lysozyme activities in vitro. The chain is Lysozyme-like protein 4 (Lyzl4) from Rattus norvegicus (Rat).